Reading from the N-terminus, the 382-residue chain is Farnesyl diphosphate synthase (382 aa).

Isopentenyl diphosphate-binding residues include lysine 81, arginine 84, and glutamine 120. Mg(2+)-binding residues include aspartate 127 and aspartate 131. Arginine 136 is a dimethylallyl diphosphate binding site. Residue arginine 137 participates in isopentenyl diphosphate binding. Dimethylallyl diphosphate-binding residues include lysine 230, threonine 231, glutamine 270, lysine 287, and lysine 296.

It belongs to the FPP/GGPP synthase family. Mg(2+) is required as a cofactor.

Its subcellular location is the cytoplasm. It carries out the reaction isopentenyl diphosphate + dimethylallyl diphosphate = (2E)-geranyl diphosphate + diphosphate. It catalyses the reaction isopentenyl diphosphate + (2E)-geranyl diphosphate = (2E,6E)-farnesyl diphosphate + diphosphate. It participates in isoprenoid biosynthesis; farnesyl diphosphate biosynthesis; farnesyl diphosphate from geranyl diphosphate and isopentenyl diphosphate: step 1/1. It functions in the pathway isoprenoid biosynthesis; geranyl diphosphate biosynthesis; geranyl diphosphate from dimethylallyl diphosphate and isopentenyl diphosphate: step 1/1. Inhibited by aminobisphosphonate drugs (aBP), such as risedronate and alendronate. Key enzyme in isoprenoid biosynthesis which catalyzes the formation of farnesyl diphosphate (FPP), a sterol precursor. Involved in the inhibition of cell growth. The protein is Farnesyl diphosphate synthase (fps) of Dictyostelium discoideum (Social amoeba).